The following is a 702-amino-acid chain: Methionine--tRNA ligase (702 aa).

The short motif at 14–24 is the 'HIGH' region element; sequence PYANGPVHLGH. Residues cysteine 146, cysteine 149, cysteine 159, and cysteine 162 each contribute to the Zn(2+) site. Residues 344 to 348 carry the 'KMSKS' region motif; it reads KFSKS. An ATP-binding site is contributed by lysine 347. The tRNA-binding domain occupies 601-702; that stretch reads DFQKVDLRAA…GEKINGSSVQ (102 aa).

It belongs to the class-I aminoacyl-tRNA synthetase family. MetG type 1 subfamily. Homodimer. Zn(2+) serves as cofactor.

It localises to the cytoplasm. It carries out the reaction tRNA(Met) + L-methionine + ATP = L-methionyl-tRNA(Met) + AMP + diphosphate. In terms of biological role, is required not only for elongation of protein synthesis but also for the initiation of all mRNA translation through initiator tRNA(fMet) aminoacylation. The protein is Methionine--tRNA ligase of Chlorobium phaeovibrioides (strain DSM 265 / 1930) (Prosthecochloris vibrioformis (strain DSM 265)).